Here is a 410-residue protein sequence, read N- to C-terminus: MKQDIIDRLTRYVTIDTQSNPESTTTPSTEKQWDLLNLLNDELTDLGLETDIDEQGYLFATLDSNVDIDLPTVGFLAHIDTSPDFNASHVNPQIIDNYDGTPIQLGKTNRTLSQDVFPAMKNVEGHTLMITDGTSLLGADDKAGVVEIMEALKYLTSHPEIKHGKIRVAFTPDEEIGRGPHEFDVERFNADFAYTMDGSEYGELQYESFNAAEAIVTCHGVNVHPGSAKDAMINAVLLGQQFNALLPQNEVPERTEGYEGFYHLMKINGDVEKTTLQYIIRDHDRNEFELRKKRLVEIKNDINSHFEDEPIEVEINDQYYNMGEKIEPNPHVIDIPKRVFEKLGIPANTAPIRGGTDGSQLSYMGLPTPNIFTGCDNFHGPFEYASIDVMEKAVQVVVGIAEEVVNTYDK.

H78 is a Zn(2+) binding site. The active site involves D80. D140 is a binding site for Zn(2+). E174 acts as the Proton acceptor in catalysis. Residues E175, D197, and H379 each coordinate Zn(2+).

It belongs to the peptidase M20B family. Zn(2+) is required as a cofactor.

The protein localises to the cytoplasm. The catalysed reaction is Release of the N-terminal residue from a tripeptide.. Its function is as follows. Cleaves the N-terminal amino acid of tripeptides. This Staphylococcus saprophyticus subsp. saprophyticus (strain ATCC 15305 / DSM 20229 / NCIMB 8711 / NCTC 7292 / S-41) protein is Peptidase T.